A 302-amino-acid polypeptide reads, in one-letter code: UDP-N-acetylenolpyruvoylglucosamine reductase (302 aa).

One can recognise an FAD-binding PCMH-type domain in the interval Lys-31–Gly-196. Residue Arg-175 is part of the active site. The active-site Proton donor is Ser-225. The active site involves Glu-295.

This sequence belongs to the MurB family. FAD serves as cofactor.

It localises to the cytoplasm. The catalysed reaction is UDP-N-acetyl-alpha-D-muramate + NADP(+) = UDP-N-acetyl-3-O-(1-carboxyvinyl)-alpha-D-glucosamine + NADPH + H(+). Its pathway is cell wall biogenesis; peptidoglycan biosynthesis. Its function is as follows. Cell wall formation. The sequence is that of UDP-N-acetylenolpyruvoylglucosamine reductase from Caldanaerobacter subterraneus subsp. tengcongensis (strain DSM 15242 / JCM 11007 / NBRC 100824 / MB4) (Thermoanaerobacter tengcongensis).